The primary structure comprises 101 residues: Chaperone modulatory protein CbpM (101 aa).

It belongs to the CbpM family.

Functionally, interacts with CbpA and inhibits both the DnaJ-like co-chaperone activity and the DNA binding activity of CbpA. Together with CbpA, modulates the activity of the DnaK chaperone system. Does not inhibit the co-chaperone activity of DnaJ. In Pseudomonas putida (strain ATCC 700007 / DSM 6899 / JCM 31910 / BCRC 17059 / LMG 24140 / F1), this protein is Chaperone modulatory protein CbpM.